The chain runs to 364 residues: MSLAGGRAPRKTAGNRLSGLLEAEEEDEFYQTTYGGFTEESGDDEYQGDQSDTEDEVDSDFDIDEGDEPSSDGEAEEPRRKRRVVTKAYKEPLKSLRPRKVNTPAGSSQKAREEKALLPLELQDDGSDSRKSMRQSTAEHTRQTFLRVQERQGQSRRRKGPHCERPLTQEELLREAKITEELNLRSLETYERLEADKKKQVHKKRKCPGPIITYHSVTVPLVGEPGPKEENVDIEGLDPAPSVSALTPHAGTGPVNPPARCSRTFITFSDDATFEEWFPQGRPPKVPVREVCPVTHRPALYRDPVTDIPYATARAFKIIREAYKKYITAHGLPPTASALGPGPPPPEPLPGSGPRALRQKIVIK.

Disordered stretches follow at residues 1–165 and 335–357; these read MSLA…HCER and TASA…PRAL. Residues 40 to 75 show a composition bias toward acidic residues; that stretch reads ESGDDEYQGDQSDTEDEVDSDFDIDEGDEPSSDGEA. A Glycyl lysine isopeptide (Lys-Gly) (interchain with G-Cter in SUMO2) cross-link involves residue K115. Phosphoserine is present on residues S127 and S129. Positions 127 to 142 are enriched in basic and acidic residues; sequence SDSRKSMRQSTAEHTR. Residues 156 to 206 mediate DNA binding; that stretch reads RRRKGPHCERPLTQEELLREAKITEELNLRSLETYERLEADKKKQVHKKRK. The span at 341–351 shows a compositional bias: pro residues; that stretch reads PGPPPPEPLPG.

It belongs to the VPS72/YL1 family. In terms of assembly, component of the NuA4 histone acetyltransferase complex which contains the catalytic subunit KAT5/TIP60 and the subunits EP400, TRRAP/PAF400, BRD8/SMAP, EPC1, DMAP1/DNMAP1, RUVBL1/TIP49, RUVBL2, ING3, actin, ACTL6A/BAF53A, MORF4L1/MRG15, MORF4L2/MRGX, MRGBP, YEATS4/GAS41 and VPS72/YL1. Component of a NuA4-related complex which contains EP400, TRRAP/PAF400, SRCAP, BRD8/SMAP, EPC1, DMAP1/DNMAP1, RUVBL1/TIP49, RUVBL2, actin, ACTL6A/BAF53A, VPS72 and YEATS4/GAS41. Also part of a multiprotein complex which contains SRCAP and which binds to H2AZ1/H2AZ. Interacts (via N-terminal domain) with heterodimer H2BC11 and H2AZ1. The interaction with H2AZ1 is enhanced by VPS72 phosphorylation which is promoted by ZNHIT1. In terms of processing, phosphorylation is enhanced by ZNHIT1 and promotes the interaction of VPS72 with histone H2AZ1.

It is found in the nucleus. Its function is as follows. Deposition-and-exchange histone chaperone specific for H2AZ1, specifically chaperones H2AZ1 and deposits it into nucleosomes. As component of the SRCAP complex, mediates the ATP-dependent exchange of histone H2AZ1/H2B dimers for nucleosomal H2A/H2B, leading to transcriptional regulation of selected genes by chromatin remodeling. The sequence is that of Vacuolar protein sorting-associated protein 72 homolog (VPS72) from Homo sapiens (Human).